A 100-amino-acid polypeptide reads, in one-letter code: Large ribosomal subunit protein uL23 (100 aa).

The protein belongs to the universal ribosomal protein uL23 family. In terms of assembly, part of the 50S ribosomal subunit. Contacts protein L29, and trigger factor when it is bound to the ribosome.

Functionally, one of the early assembly proteins it binds 23S rRNA. One of the proteins that surrounds the polypeptide exit tunnel on the outside of the ribosome. Forms the main docking site for trigger factor binding to the ribosome. The protein is Large ribosomal subunit protein uL23 of Shewanella amazonensis (strain ATCC BAA-1098 / SB2B).